Reading from the N-terminus, the 449-residue chain is Packaging protein 1 (449 aa).

A disordered region spans residues 1-77 (METRGRRPAA…QPAKRGDMLD (77 aa)). 171-178 (GPTGCGKS) is a binding site for ATP. Positions 440 to 449 (RAYRARKTPK) are DNA-binding.

It belongs to the adenoviridae packaging protein 1 family. Homodimer. Part of a genome packaging complex composed of packaging proteins 1, 2 and 3; this complex specifically binds to the packaging sequence on the left end of viral genomic DNA and performs packaging of the viral genome. Interacts with protein 33K.

It localises to the virion. The protein localises to the host nucleus. It is found in the host nucleoplasm. The protein resides in the host nucleolus. Component of the packaging machinery which encapsidates the viral DNA into preformed capsids and transcriptional activator of the viral major late promoter (MLP). Binds, along with packaging proteins 2 and 3, to the specific packaging sequence on the left end of viral genomic DNA and displays ATPase activity thereby providing the power stroke of the packaging machinery. The activity of packaging protein IVa2 is stimulated by protein 33K which acts as a terminase. May be the protein that pumps DNA into the capsid powered by ATP hydrolysis. Specifically binds to the 5'-CG-3' nucleotides of the repeats making up the packaging sequence. Component of the DEF-A and DEF-B transcription factors that bind downstream elements of the major late promoter (MLP), and stimulate transcription from the MLP after initiation of viral DNA replication. DEF-A is a heterodimer packaging proteins 1 and 2 and DEF-B is a homodimer of packaging protein 1. In Homo sapiens (Human), this protein is Packaging protein 1.